The following is a 428-amino-acid chain: Enolase (428 aa).

Gln162 lines the (2R)-2-phosphoglycerate pocket. Glu204 (proton donor) is an active-site residue. Mg(2+) is bound by residues Asp241, Glu286, and Asp313. Residues Lys338, Arg367, Ser368, and Lys389 each coordinate (2R)-2-phosphoglycerate. Lys338 functions as the Proton acceptor in the catalytic mechanism.

This sequence belongs to the enolase family. As to quaternary structure, component of the RNA degradosome, a multiprotein complex involved in RNA processing and mRNA degradation. Mg(2+) is required as a cofactor.

It is found in the cytoplasm. The protein localises to the secreted. Its subcellular location is the cell surface. It carries out the reaction (2R)-2-phosphoglycerate = phosphoenolpyruvate + H2O. It participates in carbohydrate degradation; glycolysis; pyruvate from D-glyceraldehyde 3-phosphate: step 4/5. In terms of biological role, catalyzes the reversible conversion of 2-phosphoglycerate (2-PG) into phosphoenolpyruvate (PEP). It is essential for the degradation of carbohydrates via glycolysis. This Vesicomyosocius okutanii subsp. Calyptogena okutanii (strain HA) protein is Enolase.